The following is a 229-amino-acid chain: Peptidase E (229 aa).

Residues Ser-120, Asp-135, and His-157 each act as charge relay system in the active site.

Belongs to the peptidase S51 family.

Its subcellular location is the cytoplasm. The catalysed reaction is Dipeptidase E catalyzes the hydrolysis of dipeptides Asp-|-Xaa. It does not act on peptides with N-terminal Glu, Asn or Gln, nor does it cleave isoaspartyl peptides.. Its function is as follows. Hydrolyzes dipeptides containing N-terminal aspartate residues. May play a role in allowing the cell to use peptide aspartate to spare carbon otherwise required for the synthesis of the aspartate family of amino acids. The sequence is that of Peptidase E from Shigella boydii serotype 18 (strain CDC 3083-94 / BS512).